A 178-amino-acid chain; its full sequence is ATP synthase subunit b, chloroplastic (178 aa).

The chain crosses the membrane as a helical span at residues 26–46; it reads TNLINIIILLIILFYFLKGLL.

Belongs to the ATPase B chain family. As to quaternary structure, F-type ATPases have 2 components, F(1) - the catalytic core - and F(0) - the membrane proton channel. F(1) has five subunits: alpha(3), beta(3), gamma(1), delta(1), epsilon(1). F(0) has four main subunits: a(1), b(1), b'(1) and c(10-14). The alpha and beta chains form an alternating ring which encloses part of the gamma chain. F(1) is attached to F(0) by a central stalk formed by the gamma and epsilon chains, while a peripheral stalk is formed by the delta, b and b' chains.

It is found in the plastid. The protein localises to the chloroplast thylakoid membrane. F(1)F(0) ATP synthase produces ATP from ADP in the presence of a proton or sodium gradient. F-type ATPases consist of two structural domains, F(1) containing the extramembraneous catalytic core and F(0) containing the membrane proton channel, linked together by a central stalk and a peripheral stalk. During catalysis, ATP synthesis in the catalytic domain of F(1) is coupled via a rotary mechanism of the central stalk subunits to proton translocation. Functionally, component of the F(0) channel, it forms part of the peripheral stalk, linking F(1) to F(0). The polypeptide is ATP synthase subunit b, chloroplastic (Vaucheria litorea (Yellow-green alga)).